A 226-amino-acid polypeptide reads, in one-letter code: MNPIVINRLQRKLGYTFHHQELLQQALTHRSASSKHNERLEFLGDSILSFVIANALYHRFPRVDEGDMSRMRATLVRGNTLAEIAREFELGECLRLGPGELKSGGFRRESILADTVEALIGGVFLDSDIQNVERLILSWYQTRLDEISPGDKQKDPKTRLQEYLQGRHLPLPSYLVVQVRGEAHDQEFTIHCQVSGLSEPVVGTGSSRRKAEQAAAEQALKKLELE.

The 123-residue stretch at 6–128 (INRLQRKLGY…LIGGVFLDSD (123 aa)) folds into the RNase III domain. A Mg(2+)-binding site is contributed by Glu-41. Residue Asp-45 is part of the active site. Positions 114 and 117 each coordinate Mg(2+). Glu-117 is a catalytic residue. Positions 155–225 (DPKTRLQEYL…AEQALKKLEL (71 aa)) constitute a DRBM domain.

Belongs to the ribonuclease III family. As to quaternary structure, homodimer. The cofactor is Mg(2+).

The protein resides in the cytoplasm. The catalysed reaction is Endonucleolytic cleavage to 5'-phosphomonoester.. Digests double-stranded RNA. Involved in the processing of primary rRNA transcript to yield the immediate precursors to the large and small rRNAs (23S and 16S). Processes some mRNAs, and tRNAs when they are encoded in the rRNA operon. Processes pre-crRNA and tracrRNA of type II CRISPR loci if present in the organism. The sequence is that of Ribonuclease 3 from Klebsiella pneumoniae (strain 342).